Reading from the N-terminus, the 331-residue chain is Putative peptidyl-prolyl cis-trans isomerase RF_0616 (331 aa).

The tract at residues 28–50 is disordered; it reads NPTTIEQTASNNSSTDENQTSIN. The region spanning 128–226 is the PPIase FKBP-type domain; it reads GHVVTVFYQI…NNEVKIYDDE (99 aa).

The enzyme catalyses [protein]-peptidylproline (omega=180) = [protein]-peptidylproline (omega=0). This Rickettsia felis (strain ATCC VR-1525 / URRWXCal2) (Rickettsia azadi) protein is Putative peptidyl-prolyl cis-trans isomerase RF_0616.